Reading from the N-terminus, the 24-residue chain is Brevinin-1Pa (24 aa).

A disulfide bridge links cysteine 18 with cysteine 24.

Expressed by the skin glands.

It localises to the secreted. Functionally, antibacterial activity against Gram-positive bacterium S.aureus and Gram-negative bacterium E.coli. Has activity against C.albicans. The polypeptide is Brevinin-1Pa (Lithobates pipiens (Northern leopard frog)).